A 1352-amino-acid chain; its full sequence is MTYSLTEKKRIRKDFATRSSILEVPYLLSLQKESFKEFLQKDKKPLERDPIGLHSAFSSVFPIHGVAGTADLEYVSYTMGQPEFDVKECKQRGVTYSSPLRVKMRLVLFDKDAPAGKRPVKDVKEQEVYLGDVPLMTENGTFVINGTERVIVTQLHRSPGVIFDSDKGKSHSSGKVLFNARIIPYRGSWLDFEFDHNDCVFVRIDRRRKLPVSIIFRAMGYSSEEILDTFFDHTHISYKKGAFVMQLVPSQLKGQTAAFDIADGDKVIIKAGKKITARNIKQLQEAKVDSVVVPEEYLLGKVLSSGITNEETGELVARSNEVIASDLIETMKSIKDLSFRILFIDDLENGSYISDTLNLDTTTSQLEAQIEIYRMMRPGEPPTKESSEALFNSLFFDEARYDLSSVGRMKLNRRLGRKDNEGSLVLENQDVVDVVKELLNIRNGLSTIDDIDTLGNRRIRAVGEMAENAFRVGLVRVERAVKERLNQAETDGLLPQDLINAKPVSAAIKEFFGSSQLSQFMDQVNPLSEVTHKRRVSALGPGGLTRERAGFEVRDVHPTHYGRVCPIETPEGPNIGLINTLAIYAKTNKYGFLETPYRKVIDGQVTEEVEYVSAIDEAQFVIAQASAAMDSDNKLLDELVTARHKNETILASSQDIDYMDVSPKQIVSVAASLIPFLEHDDANRALMGSNMQRQAVPTLRADKPLVGTGIEKTVAIDSGVTVIALRGGEIVSSDSARIVVRANQEEIAEGETGVDIYNLIKYQRSNQNTCINQKPIVKAGDVVSRGDVLADGPSTDLGELAIGQNMRIAFMPWNGYNFEDSILVSERVVQEDRYTTIHIEELTCLARDTKLGPEEVTSDIPNVGEAALSRLDESGIVYVGAEVKQGDILVGKVTPKGETQLTPEEKLLRAIFGEKASDVKDTSLRVSKGVEGTVIDVQVFTREGVKKDARALAIQEDELQKVRKDIDEQYKILEEDTIDRIQPMLIGQKLVDGTEITADFLASQDSSKWFGLNVADDALSSHLESLEKQLVAKKEELNGVFEEKKKKLTQGDDLQPGVSKMVKVYVAVKRRIQPGDKMAGRHGNKGVISRICPVEDMPYDETGRPVDICLNPLGVPSRMNVGQILETHLGLAAEGLGAKINAMLEQQADIKELKSFLHKIYNETQGQKVDFDSLTDAEIIELAGNLRKGVPMASPVFDGASEDEIKALLRLADLPESGQMKLYDGISGEEFDRPVTVGYMYYLKLNHLVDDKMHARSTGPYSLVTQQPLGGKAQFGGQRFGEMEVWALEAYGAAFTLQEMLTVKSDDLNGRTRMYKNIVDGNEYMEPGIPESFSVLRKEIRALGIDIELEQE.

The protein belongs to the RNA polymerase beta chain family. The RNAP catalytic core consists of 2 alpha, 1 beta, 1 beta' and 1 omega subunit. When a sigma factor is associated with the core the holoenzyme is formed, which can initiate transcription.

It carries out the reaction RNA(n) + a ribonucleoside 5'-triphosphate = RNA(n+1) + diphosphate. In terms of biological role, DNA-dependent RNA polymerase catalyzes the transcription of DNA into RNA using the four ribonucleoside triphosphates as substrates. The sequence is that of DNA-directed RNA polymerase subunit beta from Hydrogenovibrio crunogenus (strain DSM 25203 / XCL-2) (Thiomicrospira crunogena).